The following is a 358-amino-acid chain: Septin-12 (358 aa).

Positions 1-25 are disordered; that stretch reads MDPLRRSPSPCLSSQPSSPSTPPCE. The span at 6–18 shows a compositional bias: low complexity; the sequence is RSPSPCLSSQPSS. The region spanning 46–317 is the Septin-type G domain; the sequence is MGFEFNIMVV…ENYRVIRLNE (272 aa). Residues 46-319 are interaction with SEPTIN7; that stretch reads MGFEFNIMVV…YRVIRLNESH (274 aa). The tract at residues 56-63 is G1 motif; that stretch reads GQSGLGKS. GTP contacts are provided by residues 56–63, Thr89, Gly115, 195–203, Gly251, and Arg266; these read GQSGLGKS and RADSLTMEE. The segment at 112 to 115 is G3 motif; sequence DTPG. The segment at 194–197 is G4 motif; it reads ARAD. Residues 258 to 358 are self-association (via N-terminus) to polymerize octameric septin 12-7-6-2/4-2/4-6-7-12 filaments; sequence VNGRCVLGRK…GAHDDSDDEF (101 aa).

The protein belongs to the TRAFAC class TrmE-Era-EngA-EngB-Septin-like GTPase superfamily. Septin GTPase family. Septins polymerize into heterooligomeric protein complexes that form filaments, and can associate with cellular membranes, actin filaments and microtubules. GTPase activity is required for filament formation. Interacts with SEPTIN6 and SEPTIN11. Self-associates. Component of a septin core octameric complex consisting of SEPTIN12, SEPTIN7, SEPTIN6 and SEPTIN2 or SEPTIN4 in the order 12-7-6-2-2-6-7-12 or 12-7-6-4-4-6-7-12 and located in the sperm annulus; the octamer polymerizes into filaments via the SEPTIN12 N- and C-termini; the SEPTIN12:SEPTIN7 association is mediated by the respective GTP-binding domains. Interacts with SPAG4 and LMNB1. Associates with alpha- and beta-tubulins. As to expression, widely expressed. Expressed in lymph node.

The protein localises to the cytoplasm. The protein resides in the cytoskeleton. Its subcellular location is the spindle. It is found in the nucleus. It localises to the cell projection. The protein localises to the cilium. The protein resides in the flagellum. In terms of biological role, filament-forming cytoskeletal GTPase. Involved in spermatogenesis. Involved in the morphogenesis of sperm heads and the elongation of sperm tails probably implicating the association with alpha- and beta-tubulins. Forms a filamentous structure with SEPTIN7, SEPTIN6, SEPTIN2 and probably SEPTIN4 at the sperm annulus which is required for the structural integrity and motility of the sperm tail during postmeiotic differentiation. May play a role in cytokinesis (Potential). The chain is Septin-12 from Homo sapiens (Human).